The sequence spans 285 residues: Formamidopyrimidine-DNA glycosylase (285 aa).

Residue P2 is the Schiff-base intermediate with DNA of the active site. E3 acts as the Proton donor in catalysis. K61 acts as the Proton donor; for beta-elimination activity in catalysis. Residues H93, R112, and K158 each coordinate DNA. Residues 244-278 (DAYGREGEPCRRCGAIMRREKFMNRSSFYCPRCQP) form an FPG-type zinc finger. The active-site Proton donor; for delta-elimination activity is R268.

The protein belongs to the FPG family. In terms of assembly, monomer. The cofactor is Zn(2+).

It carries out the reaction Hydrolysis of DNA containing ring-opened 7-methylguanine residues, releasing 2,6-diamino-4-hydroxy-5-(N-methyl)formamidopyrimidine.. The enzyme catalyses 2'-deoxyribonucleotide-(2'-deoxyribose 5'-phosphate)-2'-deoxyribonucleotide-DNA = a 3'-end 2'-deoxyribonucleotide-(2,3-dehydro-2,3-deoxyribose 5'-phosphate)-DNA + a 5'-end 5'-phospho-2'-deoxyribonucleoside-DNA + H(+). Functionally, involved in base excision repair of DNA damaged by oxidation or by mutagenic agents. Acts as a DNA glycosylase that recognizes and removes damaged bases. Acts on oxidized purines, such as 7,8-dihydro-8-oxoguanine (8-oxoG) when paired with C, G or T. Has AP (apurinic/apyrimidinic) lyase activity and introduces nicks in the DNA strand. Cleaves the DNA backbone by beta-delta elimination to generate a single-strand break at the site of the removed base with both 3'- and 5'-phosphates. This is Formamidopyrimidine-DNA glycosylase (fpg) from Mycolicibacterium smegmatis (strain ATCC 700084 / mc(2)155) (Mycobacterium smegmatis).